A 119-amino-acid chain; its full sequence is DNA-directed RNA polymerase subunit omega (119 aa).

It belongs to the RNA polymerase subunit omega family. The RNAP catalytic core consists of 2 alpha, 1 beta, 1 beta' and 1 omega subunit. When a sigma factor is associated with the core the holoenzyme is formed, which can initiate transcription.

It carries out the reaction RNA(n) + a ribonucleoside 5'-triphosphate = RNA(n+1) + diphosphate. Promotes RNA polymerase assembly. Latches the N- and C-terminal regions of the beta' subunit thereby facilitating its interaction with the beta and alpha subunits. In Caulobacter vibrioides (strain ATCC 19089 / CIP 103742 / CB 15) (Caulobacter crescentus), this protein is DNA-directed RNA polymerase subunit omega (rpoZ).